The primary structure comprises 257 residues: Small ribosomal subunit protein eS1 (257 aa).

A disordered region spans residues 236 to 257 (TSAEGEKIERPDDYEPPVQESV). Residues 239–248 (EGEKIERPDD) show a composition bias toward basic and acidic residues.

Belongs to the eukaryotic ribosomal protein eS1 family. Component of the small ribosomal subunit. Mature ribosomes consist of a small (40S) and a large (60S) subunit. The 40S subunit contains about 33 different proteins and 1 molecule of RNA (18S). The 60S subunit contains about 49 different proteins and 3 molecules of RNA (28S, 5.8S and 5S).

The protein resides in the cytoplasm. The polypeptide is Small ribosomal subunit protein eS1 (Brugia malayi (Filarial nematode worm)).